The chain runs to 44 residues: Thymosin beta-12 (44 aa).

Composition is skewed to basic and acidic residues over residues 1-25 (MSDK…ETQE) and 33-44 (ETIEQEKAAATS). The tract at residues 1–44 (MSDKPDISEVTSFDKTKLKKTETQEKNPLPSKETIEQEKAAATS) is disordered. S2 carries the post-translational modification N-acetylserine.

Belongs to the thymosin beta family.

It localises to the cytoplasm. Its subcellular location is the cytoskeleton. Functionally, plays an important role in the organization of the cytoskeleton. Binds to and sequesters actin monomers (G actin) and therefore inhibits actin polymerization. The protein is Thymosin beta-12 of Lateolabrax japonicus (Japanese sea perch).